A 348-amino-acid polypeptide reads, in one-letter code: GMP reductase (348 aa).

NADP(+) is bound at residue 108–131 (ADFQKTKDIMALSDELIFICVDIA). The K(+) site is built by G181 and G183. C186 (thioimidate intermediate) is an active-site residue. 216–239 (IIGDGGCSCAGDVSKAFGGGADFV) serves as a coordination point for NADP(+).

Belongs to the IMPDH/GMPR family. GuaC type 1 subfamily. Homotetramer.

It carries out the reaction IMP + NH4(+) + NADP(+) = GMP + NADPH + 2 H(+). Its function is as follows. Catalyzes the irreversible NADPH-dependent deamination of GMP to IMP. It functions in the conversion of nucleobase, nucleoside and nucleotide derivatives of G to A nucleotides, and in maintaining the intracellular balance of A and G nucleotides. The chain is GMP reductase from Vibrio parahaemolyticus serotype O3:K6 (strain RIMD 2210633).